Consider the following 984-residue polypeptide: Protein translocase subunit SecA (984 aa).

ATP contacts are provided by residues Gln-96, 114 to 118 (GEGKT), and Asp-595. Composition is skewed to basic and acidic residues over residues 930–942 (EHEEEKKHQRLLE) and 952–971 (KSDKKPRPKTLKERLKEERL). The tract at residues 930-984 (EHEEEKKHQRLLEEAELQGVQGKSDKKPRPKTLKERLKEERLRKRKLKAKKKEQE) is disordered. Residues 972 to 984 (RKRKLKAKKKEQE) are compositionally biased toward basic residues.

Belongs to the SecA family. Monomer and homodimer. Part of the essential Sec protein translocation apparatus which comprises SecA, SecYEG and auxiliary proteins SecDF. Other proteins may also be involved.

The protein localises to the cell inner membrane. The protein resides in the cytoplasm. It carries out the reaction ATP + H2O + cellular proteinSide 1 = ADP + phosphate + cellular proteinSide 2.. In terms of biological role, part of the Sec protein translocase complex. Interacts with the SecYEG preprotein conducting channel. Has a central role in coupling the hydrolysis of ATP to the transfer of proteins into and across the cell membrane, serving as an ATP-driven molecular motor driving the stepwise translocation of polypeptide chains across the membrane. This chain is Protein translocase subunit SecA, found in Aquifex aeolicus (strain VF5).